The chain runs to 334 residues: Ribosomal RNA small subunit methyltransferase H (334 aa).

S-adenosyl-L-methionine is bound by residues 39–41 (GGH), Asp-59, Phe-83, Asp-100, and Gln-107. A disordered region spans residues 303–334 (ERTQAHGAERSDMRRAERPDARRAEHGEVLPP).

The protein belongs to the methyltransferase superfamily. RsmH family.

Its subcellular location is the cytoplasm. It carries out the reaction cytidine(1402) in 16S rRNA + S-adenosyl-L-methionine = N(4)-methylcytidine(1402) in 16S rRNA + S-adenosyl-L-homocysteine + H(+). Functionally, specifically methylates the N4 position of cytidine in position 1402 (C1402) of 16S rRNA. This is Ribosomal RNA small subunit methyltransferase H from Verminephrobacter eiseniae (strain EF01-2).